We begin with the raw amino-acid sequence, 77 residues long: Epoxide hydrolase (77 aa).

Monomer.

The enzyme catalyses an epoxide + H2O = an ethanediol. Functionally, this enzyme acts on aliphatic epoxides. Its substrates include epichlorohydrin, epibromohydrin, epoxyoctane and styrene epoxide. The protein is Epoxide hydrolase of Pseudomonas sp. (strain AD1).